The following is a 149-amino-acid chain: Urease accessory protein UreE (149 aa).

It belongs to the UreE family.

It is found in the cytoplasm. In terms of biological role, involved in urease metallocenter assembly. Binds nickel. Probably functions as a nickel donor during metallocenter assembly. The protein is Urease accessory protein UreE of Synechococcus sp. (strain JA-3-3Ab) (Cyanobacteria bacterium Yellowstone A-Prime).